Consider the following 455-residue polypeptide: Serine--tRNA ligase (455 aa).

252–254 (TSE) contacts L-serine. ATP contacts are provided by residues 283 to 285 (RKE) and Val299. Glu306 is a binding site for L-serine. 370–373 (EVVS) lines the ATP pocket. Thr406 serves as a coordination point for L-serine.

The protein belongs to the class-II aminoacyl-tRNA synthetase family. Type-1 seryl-tRNA synthetase subfamily. Homodimer. The tRNA molecule binds across the dimer.

Its subcellular location is the cytoplasm. The enzyme catalyses tRNA(Ser) + L-serine + ATP = L-seryl-tRNA(Ser) + AMP + diphosphate + H(+). It catalyses the reaction tRNA(Sec) + L-serine + ATP = L-seryl-tRNA(Sec) + AMP + diphosphate + H(+). The protein operates within aminoacyl-tRNA biosynthesis; selenocysteinyl-tRNA(Sec) biosynthesis; L-seryl-tRNA(Sec) from L-serine and tRNA(Sec): step 1/1. Catalyzes the attachment of serine to tRNA(Ser). Is also able to aminoacylate tRNA(Sec) with serine, to form the misacylated tRNA L-seryl-tRNA(Sec), which will be further converted into selenocysteinyl-tRNA(Sec). This chain is Serine--tRNA ligase, found in Thermococcus sibiricus (strain DSM 12597 / MM 739).